The primary structure comprises 1400 residues: MTKEIAVKEASNMLLQEPSTPSSQAVGLSSSPSSSIRKKKVNFSSELENSPGGNRPSFGLPKRGILKTSTPLSSIKQPNFQSFEGNESEKETSLQELQSSFCSGIENLQHVEKSARIETYSKLSSFLKIYTPSLPEDPIFPLLNQLCNFLLSDRCSNNSEGSPDFQLNTQANKLLSILLWHPTISSHIQPETATVFIEQSLNFLEGPKLTKALAAQHLHLLSCQKCPLSIHPLCNRILDVCFNISFPSLVIGQERLAVLTKILSQFPLEFSRRVVDWAPYLLACLVDASRPIREKALLLALDLSKHLYHDKLVARTILANFRSDIKGTAFVLIMTEQFEKLVIEEDDGVYVAHAWAAIISVLGGARISSWEYFNTWLKIIQLCFNSMNPLTKCAAQTSWIRLIHEFSLSETLTQATKRLTLLCQPISMVLGSRNLPTVKNAAMTTLIALIYACLRPGISDAMLSLLWDSVIVNILEKCALKNEVTIFESSNILLALFNTLSNGVWKDDRLVCRESVEAKELPKLNPVWVRANCSRTIEPVKTLLLLAKPDHTVKTTTPARKQHIRGLSYEQSSSVWSTYIKCLASAGQKEIKRSVETGRAICCICSSLHKFLYSKSIRKDELYVERVSRFALMVKSAIEAFGINTFVEASYLVSDNQLVLIDQTKAIDSYDHVPISPLIYLLHSLALLTNGTLFSTVHAAYSSILSSIEEYHLRFGLKLMLLWDCVSPLSDDGTLVLARVLVSHEVSRLTSEALLSELKSRNGNNSVEEGFSEEERSILLKLLSWNVKFCSISDAGSVNNLLQQYFTAIYKFEGCGSVFPFVVDPFTTILDDVLSFEANKVYSFAISLMKVSTFESCTKELPPVTLPENIRQHLDSYNHMVELYNTLLQRLSSSDQVDLQCRYLHELSEFIKKIPKEFIFHTICKLSKGLIPCFLMNAFPQLEKSTTLQKSCTNFCILILQLLLNSTATASNILESLSPLLTSGLKSISKEVVLAAIKFWNQVFGKFESEEYPIELQKTISYLSKTYIILLPFQSLCPGGKQANHQSSEKMSDILKGVDELRSVSKNGPYASSQDKGEKTTEFSGPGKPNNDNYIQIASVQELDDSSKGKAGKMPASKKNKRQKGDVKKIDETKNEATDMEESLTTPSGKVNKEVIVDDTSLRDEAIVPDKAIDVADNSNALLKENISSQSNRKADNNGTPSVNNSFTTANNDECSKENSQIEPEGQTASREGVLSTPRSTRKKRKLGRKSQSSNVNKEVAISEVSATLENVEVIERHGISEQGQNLDESACVLTNESSLSQTEIPEEKTENETTAVNGFENSKKRQFSSLLSGSIDTNNESNKVSSVEFDKSGPQDIIQSMTEATFEIEKNIQDLKSEEVQKLSDLLMRLQRAILSRIA.

2 disordered regions span residues methionine 1–arginine 63 and serine 1065–lysine 1258. Over residues serine 22–serine 35 the composition is skewed to low complexity. 3 stretches are compositionally biased toward polar residues: residues asparagine 42 to glycine 52, serine 1065 to glutamine 1074, and asparagine 1090 to serine 1099. Basic and acidic residues-rich tracts occupy residues glutamine 1123–alanine 1137 and valine 1151–aspartate 1174. The span at aspartate 1177–serine 1230 shows a compositional bias: polar residues. Residues serine 1240 to arginine 1249 are compositionally biased toward basic residues.

Belongs to the RIF1 family. Recruited to telomeres by interaction with taz1. Does not interact with rap1, unlike the orthologous protein of budding yeast.

The protein localises to the nucleus. The protein resides in the chromosome. It is found in the telomere. Functionally, negatively regulates telomere length. Appears to play no role in transcriptional silencing of telomeric loci. This Schizosaccharomyces pombe (strain 972 / ATCC 24843) (Fission yeast) protein is Telomere length regulator protein rif1 (rif1).